A 149-amino-acid chain; its full sequence is MFHEIVVLLFIFLIALIGKNDLVATAGALLFVMKFSPLSNVFPFLTERGIELGILLLTLSVLTPFAAGDIMPRDLLSTLKSPAGLIAVFSGIVASYLTGHGVELLRSRPEVMVGLIVGSIIGASFLKGVPAGPLVAAGLAAVLIKSLNL.

4 consecutive transmembrane segments (helical) span residues 5–25, 52–72, 85–105, and 111–131; these read IVVL…LVAT, LGIL…DIMP, LIAV…VELL, and VMVG…GVPA.

It belongs to the UPF0756 family.

Its subcellular location is the cell membrane. The protein is UPF0756 membrane protein Nther_1957 of Natranaerobius thermophilus (strain ATCC BAA-1301 / DSM 18059 / JW/NM-WN-LF).